We begin with the raw amino-acid sequence, 422 residues long: Adenylosuccinate synthetase (422 aa).

Residues 11–17 (GDEGKGK) and 39–41 (GHT) contribute to the GTP site. Residue Asp-12 is the Proton acceptor of the active site. Positions 12 and 39 each coordinate Mg(2+). IMP-binding positions include 12–15 (DEGK), 37–40 (NAGH), Thr-129, Arg-143, Asn-220, Thr-235, and Arg-299. His-40 serves as the catalytic Proton donor. 295–301 (VTTGRKR) is a substrate binding site. GTP contacts are provided by residues Arg-301, 327-329 (KLD), and 410-412 (GTG).

Belongs to the adenylosuccinate synthetase family. Homodimer. Requires Mg(2+) as cofactor.

The protein resides in the cytoplasm. It carries out the reaction IMP + L-aspartate + GTP = N(6)-(1,2-dicarboxyethyl)-AMP + GDP + phosphate + 2 H(+). It functions in the pathway purine metabolism; AMP biosynthesis via de novo pathway; AMP from IMP: step 1/2. In terms of biological role, plays an important role in the de novo pathway and in the salvage pathway of purine nucleotide biosynthesis. Catalyzes the first committed step in the biosynthesis of AMP from IMP. This chain is Adenylosuccinate synthetase, found in Arthroderma otae (strain ATCC MYA-4605 / CBS 113480) (Microsporum canis).